The chain runs to 329 residues: Glutamyl-tRNA reductase (329 aa).

Substrate is bound by residues 51 to 54 (TCLR), Ser-99, 104 to 106 (EDQ), and Gln-110. Cys-52 (nucleophile) is an active-site residue. An NADP(+)-binding site is contributed by 179 to 184 (GIGELA).

It belongs to the glutamyl-tRNA reductase family. Homodimer.

It carries out the reaction (S)-4-amino-5-oxopentanoate + tRNA(Glu) + NADP(+) = L-glutamyl-tRNA(Glu) + NADPH + H(+). It participates in porphyrin-containing compound metabolism; protoporphyrin-IX biosynthesis; 5-aminolevulinate from L-glutamyl-tRNA(Glu): step 1/2. Catalyzes the NADPH-dependent reduction of glutamyl-tRNA(Glu) to glutamate 1-semialdehyde (GSA). The polypeptide is Glutamyl-tRNA reductase (Fusobacterium nucleatum subsp. nucleatum (strain ATCC 25586 / DSM 15643 / BCRC 10681 / CIP 101130 / JCM 8532 / KCTC 2640 / LMG 13131 / VPI 4355)).